We begin with the raw amino-acid sequence, 473 residues long: Serine palmitoyltransferase 1 (473 aa).

The Lumenal portion of the chain corresponds to 1–15 (MATVAEQWVLVEMVQ). Residues 1–66 (MATVAEQWVL…KEELIEEWQP (66 aa)) are interaction with SPTLC2. A helical transmembrane segment spans residues 16 to 36 (ALYEAPAYHLILEGILILWII). The Cytoplasmic segment spans residues 37 to 473 (RLVFSKTYKL…IREAAQAVLL (437 aa)). Position 164 is a phosphotyrosine; by ABL (Tyr-164).

Belongs to the class-II pyridoxal-phosphate-dependent aminotransferase family. Component of the serine palmitoyltransferase (SPT) complex, which is also composed of SPTLC2 or SPTLC3 and SPTSSA or SPTSSB. The heterodimer with SPTLC2 or SPTLC3 forms the catalytic core of the enzyme, while SPTSSA or SPTSSB subunits determine substrate specificity. SPT also interacts with ORMDL proteins, especially ORMDL3, which negatively regulate SPT activity in the presence of ceramides. Forms dimers of heterodimers with SPTLC2. Interacts with RTN4 (isoform B). Pyridoxal 5'-phosphate serves as cofactor. Post-translationally, phosphorylation at Tyr-164 inhibits activity and promotes cell survival. As to expression, expressed in astrocytes.

The protein resides in the endoplasmic reticulum membrane. The catalysed reaction is L-serine + hexadecanoyl-CoA + H(+) = 3-oxosphinganine + CO2 + CoA. It carries out the reaction octadecanoyl-CoA + L-serine + H(+) = 3-oxoeicosasphinganine + CO2 + CoA. It catalyses the reaction tetradecanoyl-CoA + L-serine + H(+) = 3-oxohexadecasphinganine + CO2 + CoA. The enzyme catalyses dodecanoyl-CoA + L-serine + H(+) = 3-oxotetradecasphinganine + CO2 + CoA. It participates in lipid metabolism; sphingolipid metabolism. Its activity is regulated as follows. SPT complex catalytic activity is negatively regulated by ORMDL proteins, including ORMDL3, in the presence of ceramides. This mechanism allows to maintain ceramide levels at sufficient concentrations for the production of complex sphingolipids, but which prevents the accumulation of ceramides to levels that trigger apoptosis. Its function is as follows. Component of the serine palmitoyltransferase multisubunit enzyme (SPT) that catalyzes the initial and rate-limiting step in sphingolipid biosynthesis by condensing L-serine and activated acyl-CoA (most commonly palmitoyl-CoA) to form long-chain bases. The SPT complex is also composed of SPTLC2 or SPTLC3 and SPTSSA or SPTSSB. Within this complex, the heterodimer with SPTLC2 or SPTLC3 forms the catalytic core. The composition of the serine palmitoyltransferase (SPT) complex determines the substrate preference. The SPTLC1-SPTLC2-SPTSSA complex shows a strong preference for C16-CoA substrate, while the SPTLC1-SPTLC3-SPTSSA isozyme uses both C14-CoA and C16-CoA as substrates, with a slight preference for C14-CoA. The SPTLC1-SPTLC2-SPTSSB complex shows a strong preference for C18-CoA substrate, while the SPTLC1-SPTLC3-SPTSSB isozyme displays an ability to use a broader range of acyl-CoAs, without apparent preference. Required for adipocyte cell viability and metabolic homeostasis. This is Serine palmitoyltransferase 1 from Rattus norvegicus (Rat).